Reading from the N-terminus, the 395-residue chain is GTPase Obg (395 aa).

In terms of domain architecture, Obg spans 1–159 (MQFVDEASII…RNLRFEMKVM (159 aa)). A disordered region spans residues 128-147 (IHFKSSTNRAPRKTTPGTEG). Positions 160 to 333 (ADVGLLGVPN…LVQAAHRWLT (174 aa)) constitute an OBG-type G domain. Residues 166–173 (GVPNAGKS), 191–195 (FTTLV), 213–216 (DVPG), 283–286 (NKLD), and 314–316 (SAI) contribute to the GTP site. Serine 173 and threonine 193 together coordinate Mg(2+). The segment covering 340–368 (AEDETAFEHEREMRRRMEDEAVARAEARM) has biased composition (basic and acidic residues). The tract at residues 340–395 (AEDETAFEHEREMRRRMEDEAVARAEARMSRKRKPAEDDDDDFDEDDYDVEVEYAP) is disordered. Acidic residues predominate over residues 376–395 (EDDDDDFDEDDYDVEVEYAP).

Belongs to the TRAFAC class OBG-HflX-like GTPase superfamily. OBG GTPase family. Monomer. Requires Mg(2+) as cofactor.

Its subcellular location is the cytoplasm. Functionally, an essential GTPase which binds GTP, GDP and possibly (p)ppGpp with moderate affinity, with high nucleotide exchange rates and a fairly low GTP hydrolysis rate. Plays a role in control of the cell cycle, stress response, ribosome biogenesis and in those bacteria that undergo differentiation, in morphogenesis control. The polypeptide is GTPase Obg (Chromohalobacter salexigens (strain ATCC BAA-138 / DSM 3043 / CIP 106854 / NCIMB 13768 / 1H11)).